The following is a 184-amino-acid chain: MRNLIFFVIPFHFWLPAEGFKLNTNLLETNLINLGVVLGLLVYFGKGVLNNLLDKRKQTILSTIRDAEERYKEATDKLKQAQIRLQQAELKANEIRVNGLSEMEKEKQDLINIADEDSKRLEDSKNATIRFEEQRAIEQVRQQVSRLALERASEVLNNCLNSELHSRMIDYHIGLLKTMGSTTE.

The helical transmembrane segment at 29 to 49 threads the bilayer; the sequence is TNLINLGVVLGLLVYFGKGVL.

It belongs to the ATPase B chain family. In terms of assembly, F-type ATPases have 2 components, F(1) - the catalytic core - and F(0) - the membrane proton channel. F(1) has five subunits: alpha(3), beta(3), gamma(1), delta(1), epsilon(1). F(0) has four main subunits: a(1), b(1), b'(1) and c(10-14). The alpha and beta chains form an alternating ring which encloses part of the gamma chain. F(1) is attached to F(0) by a central stalk formed by the gamma and epsilon chains, while a peripheral stalk is formed by the delta, b and b' chains.

Its subcellular location is the plastid. The protein resides in the chloroplast thylakoid membrane. In terms of biological role, f(1)F(0) ATP synthase produces ATP from ADP in the presence of a proton or sodium gradient. F-type ATPases consist of two structural domains, F(1) containing the extramembraneous catalytic core and F(0) containing the membrane proton channel, linked together by a central stalk and a peripheral stalk. During catalysis, ATP synthesis in the catalytic domain of F(1) is coupled via a rotary mechanism of the central stalk subunits to proton translocation. Component of the F(0) channel, it forms part of the peripheral stalk, linking F(1) to F(0). This is ATP synthase subunit b, chloroplastic from Anthoceros angustus (Hornwort).